A 108-amino-acid polypeptide reads, in one-letter code: Phosphoribosyl-ATP pyrophosphatase (108 aa).

Belongs to the PRA-PH family.

It localises to the cytoplasm. The catalysed reaction is 1-(5-phospho-beta-D-ribosyl)-ATP + H2O = 1-(5-phospho-beta-D-ribosyl)-5'-AMP + diphosphate + H(+). It participates in amino-acid biosynthesis; L-histidine biosynthesis; L-histidine from 5-phospho-alpha-D-ribose 1-diphosphate: step 2/9. The chain is Phosphoribosyl-ATP pyrophosphatase from Chromobacterium violaceum (strain ATCC 12472 / DSM 30191 / JCM 1249 / CCUG 213 / NBRC 12614 / NCIMB 9131 / NCTC 9757 / MK).